The primary structure comprises 212 residues: MNDAALPPDVSAALANGLQAQSLDADFAAPLLRYLTLLVRWNKTYNLTAVRDPREMVTRHLLDSLAMQPYIVSGTLADLGTGPGLPGIPLAITRPQLQVTLVESNGKKARFMREALRHLALGNARVAEARAEAVDEPAAYDHLTARALDTLAGIIAVGGHLLRPGGSLLAMKGVYPHEEIAALPAGWRVGEVHPLQVPGLDGERHLVVVHKD.

S-adenosyl-L-methionine contacts are provided by residues Gly-80, Leu-85, 131–132 (AE), and Arg-146.

It belongs to the methyltransferase superfamily. RNA methyltransferase RsmG family.

It localises to the cytoplasm. It catalyses the reaction guanosine(527) in 16S rRNA + S-adenosyl-L-methionine = N(7)-methylguanosine(527) in 16S rRNA + S-adenosyl-L-homocysteine. Specifically methylates the N7 position of guanine in position 527 of 16S rRNA. The chain is Ribosomal RNA small subunit methyltransferase G from Xanthomonas campestris pv. campestris (strain 8004).